We begin with the raw amino-acid sequence, 455 residues long: MTFNKRQVKINHWPEKNDKEKQKYSKNRETVKLTLLTLLLLCSICFLFLTLNFPFTIEFTASIPRTCDHNFTVYVYDLPKEFNIGLLQNCRHLNIYTNMCPHVANNGLGQPLHRGRTSWFSTHQFIAEMIFHARVENHPCRTYEPDTADIFYVPFYGGLYASSVFREQNLTKRDELAVRLVNYISGQRWWKRSNGRDHFLAIGRTAWDFMRSSDTDFGANMLMQMPRVMNMSVLTVERQPWNGDNHFGIPYPSYFHPYTSAEMVTWQDKMKNVERPNLFSFVGGPRKGLEKAAIRDELIKQCAESSHCELLKCENGGSRCHNPMTVLGVMARSRFCLQAPGDSFTRRSTFDAMLAGCIPVFFSPHTMYTQYMWYLPDDKRSYSVFMDEKNNTHIEQELLRISENEVVQMREIVIDLIPRLTYAHPNSTNYDLPDAVDIALEALAKQARDNVVVSL.

Residues 1-34 (MTFNKRQVKINHWPEKNDKEKQKYSKNRETVKLT) lie on the Cytoplasmic side of the membrane. The chain crosses the membrane as a helical; Signal-anchor for type II membrane protein span at residues 35 to 55 (LLTLLLLCSICFLFLTLNFPF). Residues 56–455 (TIEFTASIPR…QARDNVVVSL (400 aa)) are Lumenal-facing. N-linked (GlcNAc...) asparagine glycosylation is found at N70, N169, N230, N390, and N426.

Belongs to the glycosyltransferase 47 family. As to expression, expressed in roots and hypocotyls.

It is found in the golgi apparatus membrane. Functions in xyloglucan synthesis by adding side chains to the xylosylated glucan backbone. Involved in the galactosylation of hemicellulose xyloglucan. The protein is Probable xyloglucan galactosyltransferase GT17 of Arabidopsis thaliana (Mouse-ear cress).